Here is a 268-residue protein sequence, read N- to C-terminus: Ubiquinone biosynthesis protein COQ4 homolog, mitochondrial (268 aa).

Residues H171, D172, H175, and E187 each contribute to the Zn(2+) site.

The protein belongs to the COQ4 family. As to quaternary structure, component of a multi-subunit COQ enzyme complex. Requires Zn(2+) as cofactor.

The protein resides in the mitochondrion inner membrane. The enzyme catalyses a 4-hydroxy-3-methoxy-5-(all-trans-polyprenyl)benzoate + H(+) = a 2-methoxy-6-(all-trans-polyprenyl)phenol + CO2. The protein operates within cofactor biosynthesis; ubiquinone biosynthesis. Functionally, lyase that catalyzes the C1-decarboxylation of 4-hydroxy-3-methoxy-5-(all-trans-polyprenyl)benzoic acid into 2-methoxy-6-(all-trans-polyprenyl)phenol during ubiquinone biosynthesis. This chain is Ubiquinone biosynthesis protein COQ4 homolog, mitochondrial, found in Drosophila melanogaster (Fruit fly).